Here is a 179-residue protein sequence, read N- to C-terminus: Shikimate kinase (179 aa).

Position 15 to 20 (15 to 20) interacts with ATP; it reads GAGKTS. A Mg(2+)-binding site is contributed by Thr-19. Residues Asp-37, Arg-61, and Gly-83 each contribute to the substrate site. Arg-122 serves as a coordination point for ATP. Arg-142 contacts substrate.

The protein belongs to the shikimate kinase family. Monomer. Requires Mg(2+) as cofactor.

The protein resides in the cytoplasm. The catalysed reaction is shikimate + ATP = 3-phosphoshikimate + ADP + H(+). The protein operates within metabolic intermediate biosynthesis; chorismate biosynthesis; chorismate from D-erythrose 4-phosphate and phosphoenolpyruvate: step 5/7. Catalyzes the specific phosphorylation of the 3-hydroxyl group of shikimic acid using ATP as a cosubstrate. In Coxiella burnetii (strain Dugway 5J108-111), this protein is Shikimate kinase.